A 41-amino-acid chain; its full sequence is Bacteriocin (41 aa).

C9 and C14 are oxidised to a cystine.

Its subcellular location is the secreted. Functionally, bacteriocin active against S.aureus, S.typhi, B.thuringiensis, Klebsiella sp., E.coli KL16 and E.coli Gj137. The sequence is that of Bacteriocin from Lactococcus sp.